A 249-amino-acid chain; its full sequence is MSKLVINNLDLYYGEFHALKDVNLDIEEKEITAFIGPSGCGKSTLLKSINRMNDLVKNCKITGDITLEGEDVYRQLDINQLRKKVGMVFQKPNPFPMSIYDNVAFGPRTHGIHSKAELDDIVERSLKQAALWDEVKDRLHKSALGMSGGQQQRLCIARALAIEPDVLLMDEPTSALDPISTAKIEELVIQLKKNYTIVIVTHNMQQAVRISDKTAFFLMGEVVEYNKTCQLFSLPQDERTENYITGRFG.

Residues 4 to 244 (LVINNLDLYY…PQDERTENYI (241 aa)) form the ABC transporter domain. Position 36–43 (36–43 (GPSGCGKS)) interacts with ATP.

It belongs to the ABC transporter superfamily. Phosphate importer (TC 3.A.1.7) family. As to quaternary structure, the complex is composed of two ATP-binding proteins (PstB), two transmembrane proteins (PstC and PstA) and a solute-binding protein (PstS).

It is found in the cell membrane. It catalyses the reaction phosphate(out) + ATP + H2O = ADP + 2 phosphate(in) + H(+). Functionally, part of the ABC transporter complex PstSACB involved in phosphate import. Responsible for energy coupling to the transport system. The sequence is that of Phosphate import ATP-binding protein PstB 3 from Streptococcus agalactiae serotype Ia (strain ATCC 27591 / A909 / CDC SS700).